We begin with the raw amino-acid sequence, 963 residues long: Translation initiation factor IF-2 (963 aa).

The segment covering 53 to 77 has biased composition (basic and acidic residues); sequence SHGQADDSARKKITLTKRETSEIRQ. The interval 53–377 is disordered; that stretch reads SHGQADDSAR…RSNFQAPTEP (325 aa). Positions 78–87 are enriched in polar residues; that stretch reads SDATGKTRTV. Basic and acidic residues-rich tracts occupy residues 98–110, 123–183, 197–250, and 267–278; these read IKRD…HQAD, EEAR…KAEE, DTSR…EAEA, and PSERKAEEKKAE. The segment covering 343–356 has biased composition (gly residues); it reads SSGGVGGWRGGPRG. The tr-type G domain occupies 463–632; the sequence is PRPPVVTVMG…SLQAEVLELK (170 aa). The interval 472-479 is G1; sequence GHVDHGKT. A GTP-binding site is contributed by 472–479; that stretch reads GHVDHGKT. Residues 497-501 are G2; the sequence is GITQH. Residues 518-521 form a G3 region; it reads DTPG. Residues 518 to 522 and 572 to 575 each bind GTP; these read DTPGH and NKVD. The tract at residues 572-575 is G4; it reads NKVD. The interval 608–610 is G5; the sequence is SAK.

This sequence belongs to the TRAFAC class translation factor GTPase superfamily. Classic translation factor GTPase family. IF-2 subfamily.

It localises to the cytoplasm. Its function is as follows. One of the essential components for the initiation of protein synthesis. Protects formylmethionyl-tRNA from spontaneous hydrolysis and promotes its binding to the 30S ribosomal subunits. Also involved in the hydrolysis of GTP during the formation of the 70S ribosomal complex. In Cupriavidus taiwanensis (strain DSM 17343 / BCRC 17206 / CCUG 44338 / CIP 107171 / LMG 19424 / R1) (Ralstonia taiwanensis (strain LMG 19424)), this protein is Translation initiation factor IF-2.